We begin with the raw amino-acid sequence, 396 residues long: MAKEKFERTKPHVNVGTIGHVDHGKTTLTAAIATVLSAKFGGEAKKYDEIDAAPEEKARGITINTAHIEYETANRHYAHVDCPGHADYVKNMITGAAQMDGAILVCSAADGPMPQTREHILLARQVGVPYIIVFLNKCDMVDDAELLELVEMEVRELLSKYDFPGDDTPIIKGSAKLALEGDKGELGEVAIMNLADALDTYIPTPERAVDGAFLMPVEDVFSISGRGTVVTGRVERGVIKVGEEIEIVGIKATAKTTCTGVEMFRKLLDQGQAGDNVGILLRGTKREDVERGQVLAKPGSITPHTHFTAEVYVLSKDEGGRHTPFFNNYRPQFYFRTTDVTGSIELPKDKEMVMPGDNVSITVKLIAPIAMEEGLRFAIREGGRTVGAGVVAKIIE.

The 197-residue stretch at 10 to 206 folds into the tr-type G domain; the sequence is KPHVNVGTIG…ALDTYIPTPE (197 aa). Positions 19 to 26 are G1; it reads GHVDHGKT. 19–26 lines the GTP pocket; it reads GHVDHGKT. Position 26 (threonine 26) interacts with Mg(2+). Residues 60–64 form a G2 region; it reads GITIN. The segment at 81–84 is G3; that stretch reads DCPG. GTP contacts are provided by residues 81-85 and 136-139; these read DCPGH and NKCD. Residues 136–139 form a G4 region; that stretch reads NKCD. The tract at residues 174–176 is G5; it reads SAK.

It belongs to the TRAFAC class translation factor GTPase superfamily. Classic translation factor GTPase family. EF-Tu/EF-1A subfamily. In terms of assembly, monomer.

The protein resides in the cytoplasm. It catalyses the reaction GTP + H2O = GDP + phosphate + H(+). GTP hydrolase that promotes the GTP-dependent binding of aminoacyl-tRNA to the A-site of ribosomes during protein biosynthesis. The sequence is that of Elongation factor Tu from Burkholderia mallei (strain NCTC 10247).